The following is a 749-amino-acid chain: Taperin (749 aa).

The disordered stretch occupies residues Pro144–Glu348. Composition is skewed to polar residues over residues Ser169–Ser179, Leu230–Thr239, and Val250–Gly266. Ser274 carries the phosphoserine modification. A compositionally biased stretch (polar residues) spans Gln323–Asp335. The span at Phe337–Met347 shows a compositional bias: basic and acidic residues. A phosphoserine mark is found at Ser401, Ser457, and Ser501. Disordered regions lie at residues Glu502–Glu586, Phe636–Pro673, and Leu730–Phe749. 2 stretches are compositionally biased toward polar residues: residues Glu534–Thr544 and His558–Ala570. Acidic residues predominate over residues Glu647–Pro668.

The protein belongs to the taperin family. Interacts with GRXCR2; the interaction restricts TPRN to the stereocilum basal region. Interacts with actin ACTB; the interaction may stabilize stereocilia. Interacts with CLIC5. Interacts with PTPRQ. TPRN, CLIC5 and PTPQR form concentric rings at the base of stereocilia and may form a complex. Interacts with phosphatase PPP1CA; the interaction results in inhibition of PPP1CA phosphatase activity. Interacts with DNA damage response proteins XRCC6/KU70, XRCC5/KU80, PARP1, TOP1 and TOP2A; these interactions recruit TPRN to sites of DNA damage where it may play a role in DNA repair. In terms of tissue distribution, in the organ of Corti, expressed in the inner ear hair cell stereocilia and the supporting cells (at protein level). Expressed in the sensory epithelia of the organ of Corti and vestibular end organs and, to a lesser extent, in Reisner's membrane and the spiral ligament (at protein level). At postnatal day 2, expression is detected in cochlea, liver, brain, kidney, heart and lung.

It is found in the cell projection. The protein localises to the stereocilium. Its subcellular location is the microvillus. The protein resides in the nucleus. It localises to the nucleoplasm. It is found in the cytoplasm. Essential for hearing. Required for maintenance of stereocilia on both inner and outer hair cells. Necessary for the integrity of the stereociliary rootlet. May act as an actin cytoskeleton regulator involved in the regulation of actin dynamics at the pointed end in hair cells. Forms rings at the base of stereocilia and binds actin filaments in the stereocilia which may stabilize the stereocilia. Acts as a strong inhibitor of PPP1CA phosphatase activity. Recruited to sites of DNA damage and may play a role in DNA damage repair. This Mus musculus (Mouse) protein is Taperin (Tprn).